Consider the following 116-residue polypeptide: HVA22-like protein e (116 aa).

The next 3 helical transmembrane spans lie at 12-32, 42-62, and 63-83; these read HSLAGPVVMLLYPLYASVIAI, QWLAYWILYSFLTLSELILQS, and LLEWIPIWYTAKLVFVAWLVL.

It belongs to the DP1 family. In terms of tissue distribution, predominantly expressed in stem.

The protein resides in the membrane. In Arabidopsis thaliana (Mouse-ear cress), this protein is HVA22-like protein e (HVA22E).